The primary structure comprises 298 residues: Acetylglutamate kinase (298 aa).

Substrate contacts are provided by residues 67–68, Arg-89, and Asn-193; that span reads GG.

The protein belongs to the acetylglutamate kinase family. ArgB subfamily.

It localises to the cytoplasm. It carries out the reaction N-acetyl-L-glutamate + ATP = N-acetyl-L-glutamyl 5-phosphate + ADP. The protein operates within amino-acid biosynthesis; L-arginine biosynthesis; N(2)-acetyl-L-ornithine from L-glutamate: step 2/4. Its function is as follows. Catalyzes the ATP-dependent phosphorylation of N-acetyl-L-glutamate. In Desulfitobacterium hafniense (strain DSM 10664 / DCB-2), this protein is Acetylglutamate kinase.